We begin with the raw amino-acid sequence, 383 residues long: MSPEVALNRISPMLSPFISSVVRNGKVGLDATNCLRITDLKSGCTSLTPGPNCDRFKLHMPYAGETLKWDIIFNAQYPELPPDFIFGEDAEFLPDPSALQNLASWNPSNPECLLLVVKELVQQYHQFQCSRLRESSRLMFEYQTLLEEPQYGENMEIYAGKKNNWTGEFSARFLLKLPVDFSNIPTYLLKDVNEDPGEDVALLSVSFEDTEATQVYPKLYLSPRIEHALGGSSALHIPAFPGGGCLIDYVPQVCHLLTNKVQYVIQGYHKRREYIAAFLSHFGTGVVEYDAEGFTKLTLLLMWKDFCFLVHIDLPLFFPRDQPTLTFQSVYHFTNSGQLYSQAQKNYPYSPRWDGNEMAKRAKAYFKTFVPQFQEAAFANGKL.

Position 1 is an N-acetylmethionine (methionine 1). Serine 2 carries the phosphoserine modification. UEV-like stretches follow at residues 30-147 and 275-364; these read DATN…TLLE and IAAF…RAKA.

This sequence belongs to the BABAM2 family. In terms of assembly, component of the ARISC complex, at least composed of UIMC1/RAP80, ABRAXAS1, BRCC3/BRCC36, BABAM2 and BABAM1/NBA1. Component of the BRCA1-A complex, at least composed of BRCA1, BARD1, UIMC1/RAP80, ABRAXAS1, BRCC3/BRCC36, BABAM2 and BABAM1/NBA1. In the BRCA1-A complex, interacts directly with ABRAXAS1, BRCC3/BRCC36 and BABAM1/NBA1. Binds polyubiquitin. Component of the BRISC complex, at least composed of ABRAXAS2, BRCC3/BRCC36, BABAM2 and BABAM1/NBA1. Identified in a complex with SHMT2 and the other subunits of the BRISC complex. Component of the BRCA1/BRCA2 containing complex (BRCC), which also contains BRCA1, BRCA2, BARD1, BRCC3/BRCC36 and RAD51. BRCC is a ubiquitin E3 ligase complex that enhances cellular survival following DNA damage. May interact with FAS and TNFRSF1A.

It localises to the cytoplasm. The protein resides in the nucleus. Component of the BRCA1-A complex, a complex that specifically recognizes 'Lys-63'-linked ubiquitinated histones H2A and H2AX at DNA lesions sites, leading to target the BRCA1-BARD1 heterodimer to sites of DNA damage at double-strand breaks (DSBs). The BRCA1-A complex also possesses deubiquitinase activity that specifically removes 'Lys-63'-linked ubiquitin on histones H2A and H2AX. In the BRCA1-A complex, it acts as an adapter that bridges the interaction between BABAM1/NBA1 and the rest of the complex, thereby being required for the complex integrity and modulating the E3 ubiquitin ligase activity of the BRCA1-BARD1 heterodimer. Component of the BRISC complex, a multiprotein complex that specifically cleaves 'Lys-63'-linked ubiquitin in various substrates. Within the BRISC complex, acts as an adapter that bridges the interaction between BABAM1/NBA1 and the rest of the complex, thereby being required for the complex integrity. The BRISC complex is required for normal mitotic spindle assembly and microtubule attachment to kinetochores via its role in deubiquitinating NUMA1. The BRISC complex plays a role in interferon signaling via its role in the deubiquitination of the interferon receptor IFNAR1; deubiquitination increases IFNAR1 activity by enhancing its stability and cell surface expression. Down-regulates the response to bacterial lipopolysaccharide (LPS) via its role in IFNAR1 deubiquitination. May play a role in homeostasis or cellular differentiation in cells of neural, epithelial and germline origins. May also act as a death receptor-associated anti-apoptotic protein, which inhibits the mitochondrial apoptotic pathway. May regulate TNF-alpha signaling through its interactions with TNFRSF1A; however these effects may be indirect. This is BRISC and BRCA1-A complex member 2 (BABAM2) from Pongo abelii (Sumatran orangutan).